Reading from the N-terminus, the 518-residue chain is Probable triacylglyceride transporter BCG_1471c (518 aa).

14 consecutive transmembrane segments (helical) span residues 7 to 27 (VAIS…YVVV), 46 to 66 (RITW…PLLG), 76 to 96 (LMLQ…ALAG), 110 to 130 (IQGV…ADLW), 144 to 164 (AAQE…VWLL), 170 to 190 (VFWI…FSLP), 201 to 221 (VDLV…IGLY), 230 to 250 (VLPD…VAFF), 270 to 290 (PFLS…VTLV), 308 to 328 (AGML…GGWI), 337 to 357 (VAFA…HWPV), 379 to 401 (LVVA…LRVV), 408 to 428 (IASA…VAAL), and 475 to 495 (IFTI…LISG).

This sequence belongs to the major facilitator superfamily.

It localises to the cell inner membrane. With respect to regulation, inhibited by CCCP and valinomycin. Its function is as follows. In association with lipoprotein LprG probably transports triacylglycerides (TAG) across the inner cell membrane into the periplasm; TAG probably regulates lipid metabolism and growth regulation. Confers resistance to several drugs such as rifampicin, clofazimine and novobiocin; is also part of the oxidative stress response and is needed to maintain normal growth characteristics. Probably an efflux transporter, involved in maintaining correct cell wall permeability. Probably required with LprG for normal surface localization of lipoarabinomannan (LAM). Required for optimal growth on cholesterol. The polypeptide is Probable triacylglyceride transporter BCG_1471c (Mycobacterium bovis (strain BCG / Pasteur 1173P2)).